A 92-amino-acid chain; its full sequence is DNA-directed RNA polymerase subunit omega (92 aa).

This sequence belongs to the RNA polymerase subunit omega family. The RNAP catalytic core consists of 2 alpha, 1 beta, 1 beta' and 1 omega subunit. When a sigma factor is associated with the core the holoenzyme is formed, which can initiate transcription.

It catalyses the reaction RNA(n) + a ribonucleoside 5'-triphosphate = RNA(n+1) + diphosphate. Functionally, promotes RNA polymerase assembly. Latches the N- and C-terminal regions of the beta' subunit thereby facilitating its interaction with the beta and alpha subunits. The chain is DNA-directed RNA polymerase subunit omega from Corynebacterium diphtheriae (strain ATCC 700971 / NCTC 13129 / Biotype gravis).